A 175-amino-acid chain; its full sequence is uncharacterized protein (175 aa).

Disordered stretches follow at residues 68 to 111 (NKSN…DDDQ) and 154 to 175 (PERA…KLTT). Positions 95–106 (EEQPMMPYQQPP) are enriched in low complexity.

This sequence belongs to the asfivirus H171R family.

Its subcellular location is the virion. This is an uncharacterized protein from African swine fever virus (isolate Pig/Kenya/KEN-50/1950) (ASFV).